Consider the following 801-residue polypeptide: Cadherin-20 (801 aa).

Residues 1 to 34 (MWTTGRMSNAKSWLGLGTSLYFWALMDLTATVLS) form the signal peptide. Residues 35 to 59 (STPMPEVELETLFSGRSQSHQRSKR) constitute a propeptide that is removed on maturation. Residues 60–619 (SWVWNQFFVL…AYLLPVSLSR (560 aa)) lie on the Extracellular side of the membrane. Cadherin domains are found at residues 61–165 (WVWN…EPKF), 166–274 (LDGP…PPRF), 275–389 (PQKH…PPVF), 390–494 (EPGF…APEF), and 494–610 (FPRF…SPEA). The N-linked (GlcNAc...) asparagine glycan is linked to asparagine 261. N-linked (GlcNAc...) asparagine glycans are attached at residues asparagine 420, asparagine 461, and asparagine 542. The helical transmembrane segment at 620 to 640 (GALIAILACIFVLLVLVLLIL) threads the bilayer. Residues 641–801 (SMRRHRKQPY…GASEGPAPLW (161 aa)) are Cytoplasmic-facing.

In terms of tissue distribution, expressed in brain. Highest level of expression in the retina. In embryo it is synthesized by the forebrain, anterior neural ridge, developing visual system, primitive external granular layer of the cerebellum and a subset of neural crest cells likely to develop into melanoblasts.

The protein localises to the cell membrane. Cadherins are calcium-dependent cell adhesion proteins. They preferentially interact with themselves in a homophilic manner in connecting cells; cadherins may thus contribute to the sorting of heterogeneous cell types. The sequence is that of Cadherin-20 (Cdh20) from Mus musculus (Mouse).